The chain runs to 355 residues: tRNA-specific 2-thiouridylase MnmA (355 aa).

Residues 7 to 14 and leucine 33 contribute to the ATP site; that span reads GLSGGVDS. The active-site Nucleophile is cysteine 94. Cysteine 94 and cysteine 193 are disulfide-bonded. Glycine 119 provides a ligand contact to ATP. The tract at residues 143 to 145 is interaction with tRNA; sequence KDQ. Cysteine 193 (cysteine persulfide intermediate) is an active-site residue. Residues 298 to 299 form an interaction with tRNA region; the sequence is RY.

It belongs to the MnmA/TRMU family.

It localises to the cytoplasm. It catalyses the reaction S-sulfanyl-L-cysteinyl-[protein] + uridine(34) in tRNA + AH2 + ATP = 2-thiouridine(34) in tRNA + L-cysteinyl-[protein] + A + AMP + diphosphate + H(+). Its function is as follows. Catalyzes the 2-thiolation of uridine at the wobble position (U34) of tRNA, leading to the formation of s(2)U34. This chain is tRNA-specific 2-thiouridylase MnmA, found in Acaryochloris marina (strain MBIC 11017).